A 173-amino-acid polypeptide reads, in one-letter code: NADH-ubiquinone oxidoreductase chain 6 (173 aa).

5 helical membrane-spanning segments follow: residues 1-21 (MTYFVLFLSLCFVLGGLAVAS), 27-47 (YGVVGLVLASVVGCGWLLSLG), 48-68 (VSFVSLVLFMVYLGGMLVVFV), 91-111 (GVSFVGVLVMGLVIGGFIGCL), and 139-159 (CGVGMFLVAGWGLLLTLFVVL).

This sequence belongs to the complex I subunit 6 family.

The protein localises to the mitochondrion membrane. It catalyses the reaction a ubiquinone + NADH + 5 H(+)(in) = a ubiquinol + NAD(+) + 4 H(+)(out). Functionally, core subunit of the mitochondrial membrane respiratory chain NADH dehydrogenase (Complex I) that is believed to belong to the minimal assembly required for catalysis. Complex I functions in the transfer of electrons from NADH to the respiratory chain. The immediate electron acceptor for the enzyme is believed to be ubiquinone. The sequence is that of NADH-ubiquinone oxidoreductase chain 6 (MT-ND6) from Fratercula cirrhata (Tufted puffin).